Consider the following 879-residue polypeptide: Leucine--tRNA ligase (879 aa).

Positions 45–55 (PYPSGALHMGH) match the 'HIGH' region motif. The 'KMSKS' region motif lies at 637-641 (KMSKS). Lysine 640 lines the ATP pocket.

The protein belongs to the class-I aminoacyl-tRNA synthetase family.

The protein localises to the cytoplasm. The enzyme catalyses tRNA(Leu) + L-leucine + ATP = L-leucyl-tRNA(Leu) + AMP + diphosphate. This Xylella fastidiosa (strain 9a5c) protein is Leucine--tRNA ligase.